The following is a 726-amino-acid chain: Putative tyrosine-protein kinase AmsA (726 aa).

The next 2 membrane-spanning stretches (helical) occupy residues 32–52 (WMIV…SLFA) and 425–445 (ILIV…LVLM).

The protein belongs to the etk/wzc family.

The protein resides in the cell inner membrane. The enzyme catalyses L-tyrosyl-[protein] + ATP = O-phospho-L-tyrosyl-[protein] + ADP + H(+). The protein operates within glycan metabolism; exopolysaccharide biosynthesis. Its function is as follows. Involved in the biosynthesis of amylovoran which functions as a virulence factor. The chain is Putative tyrosine-protein kinase AmsA (amsA) from Erwinia amylovora (Fire blight bacteria).